The sequence spans 137 residues: Phosphoribosyl-AMP cyclohydrolase (137 aa).

Mg(2+) is bound at residue D84. C85 lines the Zn(2+) pocket. Positions 86 and 88 each coordinate Mg(2+). Zn(2+) is bound by residues C101 and C108.

This sequence belongs to the PRA-CH family. In terms of assembly, homodimer. It depends on Mg(2+) as a cofactor. The cofactor is Zn(2+).

Its subcellular location is the cytoplasm. It catalyses the reaction 1-(5-phospho-beta-D-ribosyl)-5'-AMP + H2O = 1-(5-phospho-beta-D-ribosyl)-5-[(5-phospho-beta-D-ribosylamino)methylideneamino]imidazole-4-carboxamide. It functions in the pathway amino-acid biosynthesis; L-histidine biosynthesis; L-histidine from 5-phospho-alpha-D-ribose 1-diphosphate: step 3/9. In terms of biological role, catalyzes the hydrolysis of the adenine ring of phosphoribosyl-AMP. The chain is Phosphoribosyl-AMP cyclohydrolase from Chlorobium chlorochromatii (strain CaD3).